The following is a 321-amino-acid chain: Glucokinase (321 aa).

Residue Gly8–Thr13 coordinates ATP.

The protein belongs to the bacterial glucokinase family.

The protein resides in the cytoplasm. It carries out the reaction D-glucose + ATP = D-glucose 6-phosphate + ADP + H(+). The chain is Glucokinase from Escherichia fergusonii (strain ATCC 35469 / DSM 13698 / CCUG 18766 / IAM 14443 / JCM 21226 / LMG 7866 / NBRC 102419 / NCTC 12128 / CDC 0568-73).